The following is an 86-amino-acid chain: MLVVFQRVVRATVLVGRKDTIRTVKTHSGAKKRWILTEDGKSFKRKHAGAQHLNRDTSSSTRARQRQWEEANTIQKRVLKRLLPFK.

A mitochondrion-targeting transit peptide spans 1 to 18 (MLVVFQRVVRATVLVGRK). The segment at 45–69 (RKHAGAQHLNRDTSSSTRARQRQWE) is disordered.

This sequence belongs to the bacterial ribosomal protein bL35 family. Component of the mitochondrial large ribosomal subunit (mt-LSU). Mature yeast 74S mitochondrial ribosomes consist of a small (37S) and a large (54S) subunit. The 37S small subunit contains a 15S ribosomal RNA (15S mt-rRNA) and at least 32 different proteins. The 54S large subunit contains a 21S rRNA (21S mt-rRNA) and at least 45 different proteins.

Its subcellular location is the mitochondrion. Its function is as follows. Component of the mitochondrial ribosome (mitoribosome), a dedicated translation machinery responsible for the synthesis of mitochondrial genome-encoded proteins, including at least some of the essential transmembrane subunits of the mitochondrial respiratory chain. The mitoribosomes are attached to the mitochondrial inner membrane and translation products are cotranslationally integrated into the membrane. The polypeptide is Large ribosomal subunit protein bL35m (new15) (Schizosaccharomyces pombe (strain 972 / ATCC 24843) (Fission yeast)).